We begin with the raw amino-acid sequence, 267 residues long: Tetrahydromethanopterin S-methyltransferase subunit C (267 aa).

A run of 7 helical transmembrane segments spans residues 19–39 (IMAI…FMPA), 40–60 (QFSF…ADAV), 75–95 (IGMI…SVGG), 96–116 (IAGP…IGVL), 131–151 (AMVE…VVIA), 162–182 (YVVA…GILH), and 221–241 (GLMA…WAFM).

It belongs to the MtrC family. In terms of assembly, the complex is composed of 8 subunits; MtrA, MtrB, MtrC, MtrD, MtrE, MtrF, MtrG and MtrH.

The protein resides in the cell membrane. The enzyme catalyses 5-methyl-5,6,7,8-tetrahydromethanopterin + coenzyme M + 2 Na(+)(in) = 5,6,7,8-tetrahydromethanopterin + methyl-coenzyme M + 2 Na(+)(out). It functions in the pathway one-carbon metabolism; methanogenesis from CO(2); methyl-coenzyme M from 5,10-methylene-5,6,7,8-tetrahydromethanopterin: step 2/2. Its function is as follows. Part of a complex that catalyzes the formation of methyl-coenzyme M and tetrahydromethanopterin from coenzyme M and methyl-tetrahydromethanopterin. This is an energy-conserving, sodium-ion translocating step. This is Tetrahydromethanopterin S-methyltransferase subunit C from Methanosarcina acetivorans (strain ATCC 35395 / DSM 2834 / JCM 12185 / C2A).